The chain runs to 98 residues: NADH-ubiquinone oxidoreductase chain 4L (98 aa).

3 helical membrane passes run 1–21 (MSMM…GLLM), 29–49 (SLLC…VTIL), and 61–81 (IILL…LVMV).

This sequence belongs to the complex I subunit 4L family. In terms of assembly, core subunit of respiratory chain NADH dehydrogenase (Complex I) which is composed of 45 different subunits.

It localises to the mitochondrion inner membrane. The catalysed reaction is a ubiquinone + NADH + 5 H(+)(in) = a ubiquinol + NAD(+) + 4 H(+)(out). In terms of biological role, core subunit of the mitochondrial membrane respiratory chain NADH dehydrogenase (Complex I) which catalyzes electron transfer from NADH through the respiratory chain, using ubiquinone as an electron acceptor. Part of the enzyme membrane arm which is embedded in the lipid bilayer and involved in proton translocation. The sequence is that of NADH-ubiquinone oxidoreductase chain 4L (MT-ND4L) from Zalophus californianus (California sealion).